The chain runs to 1409 residues: DNA-directed RNA polymerase subunit beta' (1409 aa).

Positions 69, 71, 84, and 87 each coordinate Zn(2+). 3 residues coordinate Mg(2+): Asp461, Asp463, and Asp465. Zn(2+) is bound by residues Cys805, Cys879, Cys886, and Cys889.

This sequence belongs to the RNA polymerase beta' chain family. The RNAP catalytic core consists of 2 alpha, 1 beta, 1 beta' and 1 omega subunit. When a sigma factor is associated with the core the holoenzyme is formed, which can initiate transcription. Mg(2+) is required as a cofactor. Requires Zn(2+) as cofactor.

The enzyme catalyses RNA(n) + a ribonucleoside 5'-triphosphate = RNA(n+1) + diphosphate. DNA-dependent RNA polymerase catalyzes the transcription of DNA into RNA using the four ribonucleoside triphosphates as substrates. The chain is DNA-directed RNA polymerase subunit beta' from Anaplasma phagocytophilum (strain HZ).